The primary structure comprises 192 residues: uncharacterized protein (192 aa).

2 disordered regions span residues 1-37 (MASS…PAFP) and 146-192 (ARGP…EQNK). Pro residues-rich tracts occupy residues 8 to 19 (TPSPAGLPPPSV) and 159 to 180 (APPP…PGWP).

This is an uncharacterized protein from Homo sapiens (Human).